A 432-amino-acid chain; its full sequence is Adenylosuccinate synthetase (432 aa).

Residues 12–18 (GDEGKGK) and 40–42 (GHT) contribute to the GTP site. Asp-13 functions as the Proton acceptor in the catalytic mechanism. Residues Asp-13 and Gly-40 each contribute to the Mg(2+) site. Residues 13-16 (DEGK), 38-41 (NAGH), Thr-132, Arg-146, Gln-226, Thr-241, and Arg-305 each bind IMP. His-41 acts as the Proton donor in catalysis. 301-307 (TVTGRKR) serves as a coordination point for substrate. GTP-binding positions include Arg-307, 333 to 335 (KLD), and 415 to 417 (STS).

This sequence belongs to the adenylosuccinate synthetase family. Homodimer. Mg(2+) serves as cofactor.

It localises to the cytoplasm. The enzyme catalyses IMP + L-aspartate + GTP = N(6)-(1,2-dicarboxyethyl)-AMP + GDP + phosphate + 2 H(+). Its pathway is purine metabolism; AMP biosynthesis via de novo pathway; AMP from IMP: step 1/2. In terms of biological role, plays an important role in the de novo pathway of purine nucleotide biosynthesis. Catalyzes the first committed step in the biosynthesis of AMP from IMP. The chain is Adenylosuccinate synthetase from Agrobacterium fabrum (strain C58 / ATCC 33970) (Agrobacterium tumefaciens (strain C58)).